Consider the following 627-residue polypeptide: tRNA uridine 5-carboxymethylaminomethyl modification enzyme MnmG (627 aa).

FAD is bound by residues 16–21, Val-128, and Ser-183; that span reads GAGHAG. 277 to 291 serves as a coordination point for NAD(+); it reads GPRYCPSIEDKIVRF. Position 374 (Gln-374) interacts with FAD.

It belongs to the MnmG family. In terms of assembly, homodimer. Heterotetramer of two MnmE and two MnmG subunits. It depends on FAD as a cofactor.

It localises to the cytoplasm. Functionally, NAD-binding protein involved in the addition of a carboxymethylaminomethyl (cmnm) group at the wobble position (U34) of certain tRNAs, forming tRNA-cmnm(5)s(2)U34. The sequence is that of tRNA uridine 5-carboxymethylaminomethyl modification enzyme MnmG from Finegoldia magna (strain ATCC 29328 / DSM 20472 / WAL 2508) (Peptostreptococcus magnus).